We begin with the raw amino-acid sequence, 805 residues long: Leucine--tRNA ligase (805 aa).

Positions 40–51 (PYPSGAGLHVGH) match the 'HIGH' region motif. Positions 576–580 (KMSKS) match the 'KMSKS' region motif. Residue K579 participates in ATP binding.

Belongs to the class-I aminoacyl-tRNA synthetase family.

It localises to the cytoplasm. It catalyses the reaction tRNA(Leu) + L-leucine + ATP = L-leucyl-tRNA(Leu) + AMP + diphosphate. The polypeptide is Leucine--tRNA ligase (Anoxybacillus flavithermus (strain DSM 21510 / WK1)).